The following is a 593-amino-acid chain: Glutamyl-tRNA(Gln) amidotransferase subunit B, mitochondrial (593 aa).

The N-terminal 49 residues, M1–S49, are a transit peptide targeting the mitochondrion. The span at S27–L42 shows a compositional bias: low complexity. A disordered region spans residues S27 to S80. Residues L66–S80 are compositionally biased toward basic and acidic residues.

This sequence belongs to the GatB/GatE family. GatB subfamily. Subunit of the heterotrimeric GatCAB amidotransferase (AdT) complex, composed of A, B and C subunits.

It localises to the mitochondrion. The enzyme catalyses L-glutamyl-tRNA(Gln) + L-glutamine + ATP + H2O = L-glutaminyl-tRNA(Gln) + L-glutamate + ADP + phosphate + H(+). Functionally, allows the formation of correctly charged Gln-tRNA(Gln) through the transamidation of misacylated Glu-tRNA(Gln) in the mitochondria. The reaction takes place in the presence of glutamine and ATP through an activated gamma-phospho-Glu-tRNA(Gln). The chain is Glutamyl-tRNA(Gln) amidotransferase subunit B, mitochondrial from Aspergillus oryzae (strain ATCC 42149 / RIB 40) (Yellow koji mold).